Here is a 423-residue protein sequence, read N- to C-terminus: Acetylornithine aminotransferase, mitochondrial (423 aa).

Residues 1–13 (MFKRYLSSTSSRR) constitute a mitochondrion transit peptide. Residue K276 is modified to N6-(pyridoxal phosphate)lysine.

Belongs to the class-III pyridoxal-phosphate-dependent aminotransferase family. The cofactor is pyridoxal 5'-phosphate.

Its subcellular location is the mitochondrion matrix. It carries out the reaction N(2)-acetyl-L-ornithine + 2-oxoglutarate = N-acetyl-L-glutamate 5-semialdehyde + L-glutamate. The protein operates within amino-acid biosynthesis; L-arginine biosynthesis; N(2)-acetyl-L-ornithine from L-glutamate: step 4/4. Catalyzes the conversion of N-acetylglutamate-gamma-semialdehyde (NAGSA) to N-acetylornithine in arginine biosynthesis. This Saccharomyces cerevisiae (strain ATCC 204508 / S288c) (Baker's yeast) protein is Acetylornithine aminotransferase, mitochondrial (ARG8).